We begin with the raw amino-acid sequence, 402 residues long: 2-pyrone synthase (402 aa).

Positions 60, 63, 169, 272, 274, 310, 312, and 313 each coordinate acetoacetyl-CoA. Residue Cys-169 is part of the active site.

This sequence belongs to the thiolase-like superfamily. Chalcone/stilbene synthases family. As to expression, expressed in both vegetative and reproductive organs. The expression is strong in the leaf, scape (the inflorescence stem) and corolla (both in the ligule and the unpigmented tube), moderate in the bract and carpel, detectable in the root and pappus but not detectable in the stamen.

It carries out the reaction 2 malonyl-CoA + acetyl-CoA + 2 H(+) = triacetate lactone + 2 CO2 + 3 CoA. Functionally, polyketide synthase, which uses acetyl-CoA and two condensation reactions with malonyl-CoA to form triacetic acid lactone (also called methylpyrone), a precursor of phytoalexin. May participate in insect and pathogen resistance. In Gerbera hybrida (Daisy), this protein is 2-pyrone synthase.